Here is a 173-residue protein sequence, read N- to C-terminus: T-cell receptor beta-1 chain C region (173 aa).

A c region region spans residues 1–146 (EDLRNVTPPK…GVLSATILYE (146 aa)). Cys31 and Cys71 are disulfide-bonded. Asn67 and Asn116 each carry an N-linked (GlcNAc...) asparagine glycan. Residues 146–167 (EILLGKATLYAVLVSTLVVMAM) form a helical membrane-spanning segment. Topologically, residues 168–173 (VKRKNS) are cytoplasmic.

Its subcellular location is the membrane. This Mus musculus (Mouse) protein is T-cell receptor beta-1 chain C region.